Reading from the N-terminus, the 1715-residue chain is Pentafunctional AROM polypeptide (1715 aa).

The segment covering 1–17 (MTSTASAQQPVLRTKTP) has biased composition (polar residues). The tract at residues 1-26 (MTSTASAQQPVLRTKTPSYHAPPSTD) is disordered. The 3-dehydroquinate synthase stretch occupies residues 1-421 (MTSTASAQQP…VQNMASTVSD (421 aa)). NAD(+) is bound by residues 71-73 (DQN), 112-115 (EASK), 143-145 (GGV), and Asp148. Arg159 serves as a coordination point for 7-phospho-2-dehydro-3-deoxy-D-arabino-heptonate. Residue 168–169 (TT) participates in NAD(+) binding. 7-phospho-2-dehydro-3-deoxy-D-arabino-heptonate-binding residues include Asp175 and Lys181. Lys190 lines the NAD(+) pocket. Asn191 lines the 7-phospho-2-dehydro-3-deoxy-D-arabino-heptonate pocket. Residues 208–211 (WLKT) and Asn219 each bind NAD(+). Zn(2+) is bound at residue Glu223. Residues 223 to 226 (EVVK) and Lys287 each bind 7-phospho-2-dehydro-3-deoxy-D-arabino-heptonate. Glu297 functions as the Proton acceptor; for 3-dehydroquinate synthase activity in the catalytic mechanism. Residues 301–305 (RNLVN) and His308 contribute to the 7-phospho-2-dehydro-3-deoxy-D-arabino-heptonate site. His308 lines the Zn(2+) pocket. His312 (proton acceptor; for 3-dehydroquinate synthase activity) is an active-site residue. Residues His324 and Lys393 each coordinate 7-phospho-2-dehydro-3-deoxy-D-arabino-heptonate. His324 provides a ligand contact to Zn(2+). Residues 434-895 (VTPIHEQPNK…WDDLERKLGI (462 aa)) form an EPSP synthase region. The For EPSP synthase activity role is filled by Cys877. The shikimate kinase stretch occupies residues 948–1165 (HATIICIGMR…KGGRRTYFLS (218 aa)). An ATP-binding site is contributed by 955 to 962 (GMRASGKT). Residues 1166–1389 (LTFPDVVPKL…AAPGQLSFRQ (224 aa)) form a 3-dehydroquinase region. His1292 acts as the Proton acceptor; for 3-dehydroquinate dehydratase activity in catalysis. The Schiff-base intermediate with substrate; for 3-dehydroquinate dehydratase activity role is filled by Lys1320. The shikimate dehydrogenase stretch occupies residues 1402 to 1715 (ARRFALFGSP…AAWDVYLQRC (314 aa)).

The protein in the N-terminal section; belongs to the sugar phosphate cyclases superfamily. Dehydroquinate synthase family. In the 2nd section; belongs to the EPSP synthase family. This sequence in the 3rd section; belongs to the shikimate kinase family. It in the 4th section; belongs to the type-I 3-dehydroquinase family. The protein in the C-terminal section; belongs to the shikimate dehydrogenase family. Homodimer. The cofactor is Zn(2+).

It localises to the cytoplasm. The enzyme catalyses 7-phospho-2-dehydro-3-deoxy-D-arabino-heptonate = 3-dehydroquinate + phosphate. The catalysed reaction is 3-dehydroquinate = 3-dehydroshikimate + H2O. It catalyses the reaction shikimate + NADP(+) = 3-dehydroshikimate + NADPH + H(+). It carries out the reaction shikimate + ATP = 3-phosphoshikimate + ADP + H(+). The enzyme catalyses 3-phosphoshikimate + phosphoenolpyruvate = 5-O-(1-carboxyvinyl)-3-phosphoshikimate + phosphate. The protein operates within metabolic intermediate biosynthesis; chorismate biosynthesis; chorismate from D-erythrose 4-phosphate and phosphoenolpyruvate: step 2/7. It participates in metabolic intermediate biosynthesis; chorismate biosynthesis; chorismate from D-erythrose 4-phosphate and phosphoenolpyruvate: step 3/7. Its pathway is metabolic intermediate biosynthesis; chorismate biosynthesis; chorismate from D-erythrose 4-phosphate and phosphoenolpyruvate: step 4/7. It functions in the pathway metabolic intermediate biosynthesis; chorismate biosynthesis; chorismate from D-erythrose 4-phosphate and phosphoenolpyruvate: step 5/7. The protein operates within metabolic intermediate biosynthesis; chorismate biosynthesis; chorismate from D-erythrose 4-phosphate and phosphoenolpyruvate: step 6/7. In terms of biological role, the AROM polypeptide catalyzes 5 consecutive enzymatic reactions in prechorismate polyaromatic amino acid biosynthesis. The polypeptide is Pentafunctional AROM polypeptide (Mycosarcoma maydis (Corn smut fungus)).